A 90-amino-acid polypeptide reads, in one-letter code: Probable Fe(2+)-trafficking protein (90 aa).

It belongs to the Fe(2+)-trafficking protein family. Monomer.

Functionally, could be a mediator in iron transactions between iron acquisition and iron-requiring processes, such as synthesis and/or repair of Fe-S clusters in biosynthetic enzymes. In Yersinia enterocolitica serotype O:8 / biotype 1B (strain NCTC 13174 / 8081), this protein is Probable Fe(2+)-trafficking protein.